Consider the following 752-residue polypeptide: Catalase-peroxidase 1 (752 aa).

The tract at residues 1-45 (MPPNTPDASDARPPQADTETHSHSESENPVIESPKPKAHAPLTNQ) is disordered. The tryptophyl-tyrosyl-methioninium (Trp-Tyr) (with M-270) cross-link spans 116-244 (WHAAGTYRIF…YGATTMGLIY (129 aa)). His-117 (proton acceptor) is an active-site residue. The segment at residues 244–270 (YVNPEGPEGKPDPLAAAHDIRETFGRM) is a cross-link (tryptophyl-tyrosyl-methioninium (Tyr-Met) (with W-116)). Residue His-285 coordinates heme b.

This sequence belongs to the peroxidase family. Peroxidase/catalase subfamily. As to quaternary structure, homodimer or homotetramer. Heme b serves as cofactor. Post-translationally, formation of the three residue Trp-Tyr-Met cross-link is important for the catalase, but not the peroxidase activity of the enzyme.

It carries out the reaction H2O2 + AH2 = A + 2 H2O. The enzyme catalyses 2 H2O2 = O2 + 2 H2O. Bifunctional enzyme with both catalase and broad-spectrum peroxidase activity. May play a role in the intracellular survival of mycobacteria. In Mycolicibacterium fortuitum (Mycobacterium fortuitum), this protein is Catalase-peroxidase 1.